A 558-amino-acid polypeptide reads, in one-letter code: CTP synthase (558 aa).

Residues 1–271 (MAARQQTKHL…DAYVVRRLGL (271 aa)) form an amidoligase domain region. S18 lines the CTP pocket. UTP is bound at residue S18. ATP contacts are provided by residues 19–24 (SLGKGL) and D76. Mg(2+) contacts are provided by D76 and E145. CTP contacts are provided by residues 152–154 (DIE), 192–197 (KTKPTQ), and K228. UTP-binding positions include 192–197 (KTKPTQ) and K228. Residues 296-545 (TIALVGKYVD…IRAALLHRCP (250 aa)) enclose the Glutamine amidotransferase type-1 domain. G359 provides a ligand contact to L-glutamine. Residue C386 is the Nucleophile; for glutamine hydrolysis of the active site. L-glutamine-binding positions include 387–390 (LGLQ), E410, and R471. Active-site residues include H518 and E520.

Belongs to the CTP synthase family. As to quaternary structure, homotetramer.

It catalyses the reaction UTP + L-glutamine + ATP + H2O = CTP + L-glutamate + ADP + phosphate + 2 H(+). It carries out the reaction L-glutamine + H2O = L-glutamate + NH4(+). The catalysed reaction is UTP + NH4(+) + ATP = CTP + ADP + phosphate + 2 H(+). It functions in the pathway pyrimidine metabolism; CTP biosynthesis via de novo pathway; CTP from UDP: step 2/2. Its activity is regulated as follows. Allosterically activated by GTP, when glutamine is the substrate; GTP has no effect on the reaction when ammonia is the substrate. The allosteric effector GTP functions by stabilizing the protein conformation that binds the tetrahedral intermediate(s) formed during glutamine hydrolysis. Inhibited by the product CTP, via allosteric rather than competitive inhibition. In terms of biological role, catalyzes the ATP-dependent amination of UTP to CTP with either L-glutamine or ammonia as the source of nitrogen. Regulates intracellular CTP levels through interactions with the four ribonucleotide triphosphates. The protein is CTP synthase of Acidothermus cellulolyticus (strain ATCC 43068 / DSM 8971 / 11B).